A 459-amino-acid polypeptide reads, in one-letter code: Serine/threonine-protein kinase 12 (459 aa).

The segment at Met-1–Ser-30 is disordered. ANK repeat units lie at residues Asp-42–Tyr-71, Asp-75–Pro-104, and Trp-108–Met-137. One can recognise a Protein kinase domain in the interval Val-102–Leu-417. ATP-binding positions include Trp-108–Ala-116 and Lys-184. The Proton acceptor role is filled by Asp-281.

It belongs to the protein kinase superfamily. Ser/Thr protein kinase family. As to quaternary structure, interacts with BLUS1, PHOT1 and PHOT2. In terms of tissue distribution, accumulates in leaves, stems, petioles and roots, especially in guard cells.

Its subcellular location is the cytoplasm. The protein resides in the cytosol. The catalysed reaction is L-seryl-[protein] + ATP = O-phospho-L-seryl-[protein] + ADP + H(+). It carries out the reaction L-threonyl-[protein] + ATP = O-phospho-L-threonyl-[protein] + ADP + H(+). Serine/threonine protein kinase that phosphorylates proteins on serine and threonine residues. Mediates blue light-dependent stomatal opening in guard cells by promoting plasma membrane-type ATPases (AHA1 and AHA2) phosphorylation. The polypeptide is Serine/threonine-protein kinase 12 (Arabidopsis thaliana (Mouse-ear cress)).